The primary structure comprises 369 residues: MNCKYFGICGACIVYDGGYETQLSQKVELNKELFAPFYMGKISVFESPRSNYRSRSEFKIWHEGDEKINYAMNRADKGGVILIDECPQVSSAIFALMPKLLRAIKRHKIDFKLFGVDFLSSNSGEIVVSLLYHRALDSTFKEIAEIISDELDIYIIGRSRGQKVVIKQDYVTEILHVDGVEFKFNYIENSFTQPNAKVNEQMIGWALRELPNMDADLLELYCGAGNFTIPFASKYRKILATEISKSSINAAKSNMSLNKVKNISFVRMGVEEFVEALDGVRIFNRMKEIDIDSYEIKTIFVDPPRSGMDEATCRFASRYENIIYISCNPQTLLRDLELLTKTHNVIDMALFDQFPYTHHAEMGAKLVKK.

5 residues coordinate S-adenosyl-L-methionine: glutamine 193, tyrosine 221, asparagine 226, glutamate 242, and aspartate 302. Cysteine 327 (nucleophile) is an active-site residue. The active-site Proton acceptor is the glutamate 361.

The protein belongs to the class I-like SAM-binding methyltransferase superfamily. RNA M5U methyltransferase family. TrmA subfamily.

The catalysed reaction is uridine(54) in tRNA + S-adenosyl-L-methionine = 5-methyluridine(54) in tRNA + S-adenosyl-L-homocysteine + H(+). The enzyme catalyses uridine(341) in tmRNA + S-adenosyl-L-methionine = 5-methyluridine(341) in tmRNA + S-adenosyl-L-homocysteine + H(+). Its function is as follows. Dual-specificity methyltransferase that catalyzes the formation of 5-methyluridine at position 54 (m5U54) in all tRNAs, and that of position 341 (m5U341) in tmRNA (transfer-mRNA). The protein is tRNA/tmRNA (uracil-C(5))-methyltransferase of Sulfurimonas denitrificans (strain ATCC 33889 / DSM 1251) (Thiomicrospira denitrificans (strain ATCC 33889 / DSM 1251)).